Reading from the N-terminus, the 257-residue chain is Dihydroorotate dehydrogenase B (NAD(+)), electron transfer subunit (257 aa).

The region spanning 2–102 (IGRERMTVVS…LGPLGHGFPL (101 aa)) is the FAD-binding FR-type domain. Residues 53–56 (RPLS), 70–72 (IYR), and 77–78 (GT) each bind FAD. 4 residues coordinate [2Fe-2S] cluster: Cys221, Cys226, Cys229, and Cys244.

The protein belongs to the PyrK family. As to quaternary structure, heterotetramer of 2 PyrK and 2 PyrD type B subunits. Requires [2Fe-2S] cluster as cofactor. The cofactor is FAD.

It functions in the pathway pyrimidine metabolism; UMP biosynthesis via de novo pathway; orotate from (S)-dihydroorotate (NAD(+) route): step 1/1. In terms of biological role, responsible for channeling the electrons from the oxidation of dihydroorotate from the FMN redox center in the PyrD type B subunit to the ultimate electron acceptor NAD(+). The polypeptide is Dihydroorotate dehydrogenase B (NAD(+)), electron transfer subunit (Geobacillus thermodenitrificans (strain NG80-2)).